We begin with the raw amino-acid sequence, 698 residues long: uncharacterized protein (698 aa).

The first 17 residues, 1 to 17 (MKKRHLLSLLALGISTA), serve as a signal peptide directing secretion. Residue cysteine 18 is the site of N-palmitoyl cysteine attachment. The S-diacylglycerol cysteine moiety is linked to residue cysteine 18.

This sequence to E.coli YmcA.

It localises to the cell membrane. This is an uncharacterized protein from Escherichia coli (strain K12).